Consider the following 137-residue polypeptide: Outer membrane protein assembly factor BamE (137 aa).

The first 18 residues, 1–18 (MQVKTLLGATFLALSLAS), serve as a signal peptide directing secretion. A lipid anchor (N-palmitoyl cysteine) is attached at Cys19. Cys19 carries S-diacylglycerol cysteine lipidation.

The protein belongs to the BamE family. In terms of assembly, part of the Bam complex.

It is found in the cell outer membrane. Its function is as follows. Part of the outer membrane protein assembly complex, which is involved in assembly and insertion of beta-barrel proteins into the outer membrane. This is Outer membrane protein assembly factor BamE from Haemophilus influenzae (strain ATCC 51907 / DSM 11121 / KW20 / Rd).